We begin with the raw amino-acid sequence, 416 residues long: Cyclin-dependent kinase 8 (416 aa).

Residues 1 to 15 (MDYDFKVKLTGERER) are interaction with CCNC. Residues 21 to 287 (EYEGCKVGRG…SEQAMQDPYF (267 aa)) form the Protein kinase domain. Residues 27 to 35 (VGRGTYGHV) and Lys-52 contribute to the ATP site. Asp-151 (proton acceptor) is an active-site residue. The segment at 313 to 416 (EEEPDDKGDK…PQYSHQTHRY (104 aa)) is disordered. The span at 325–343 (QQQQQGNNHTNGTGHPGNQ) shows a compositional bias: low complexity. Polar residues-rich tracts occupy residues 361–378 (PTTTSGGLIMTSDYQRSN) and 386–416 (PGPSTSQPQSSMGYTSTSQQPPQYSHQTHRY).

This sequence belongs to the protein kinase superfamily. CMGC Ser/Thr protein kinase family. CDC2/CDKX subfamily. Component of the Mediator complex. Interacts with ccnc. It depends on Mg(2+) as a cofactor.

The protein localises to the nucleus. The enzyme catalyses L-seryl-[protein] + ATP = O-phospho-L-seryl-[protein] + ADP + H(+). The catalysed reaction is L-threonyl-[protein] + ATP = O-phospho-L-threonyl-[protein] + ADP + H(+). It carries out the reaction [DNA-directed RNA polymerase] + ATP = phospho-[DNA-directed RNA polymerase] + ADP + H(+). Component of the Mediator complex, a coactivator involved in regulated gene transcription of nearly all RNA polymerase II-dependent genes. Mediator functions as a bridge to convey information from gene-specific regulatory proteins to the basal RNA polymerase II transcription machinery. Mediator is recruited to promoters by direct interactions with regulatory proteins and serves as a scaffold for the assembly of a functional pre-initiation complex with RNA polymerase II and the general transcription factors. Phosphorylates the CTD (C-terminal domain) of the large subunit of RNA polymerase II (RNAp II), which may inhibit the formation of a transcription initiation complex. This is Cyclin-dependent kinase 8 (cdk8) from Xenopus laevis (African clawed frog).